A 179-amino-acid polypeptide reads, in one-letter code: Acireductone dioxygenase (179 aa).

Residues His-99, His-101, Glu-105, and His-143 each coordinate Fe(2+). Residues His-99, His-101, Glu-105, and His-143 each contribute to the Ni(2+) site.

It belongs to the acireductone dioxygenase (ARD) family. Monomer. The cofactor is Fe(2+). Ni(2+) serves as cofactor.

It carries out the reaction 1,2-dihydroxy-5-(methylsulfanyl)pent-1-en-3-one + O2 = 3-(methylsulfanyl)propanoate + CO + formate + 2 H(+). It catalyses the reaction 1,2-dihydroxy-5-(methylsulfanyl)pent-1-en-3-one + O2 = 4-methylsulfanyl-2-oxobutanoate + formate + 2 H(+). The protein operates within amino-acid biosynthesis; L-methionine biosynthesis via salvage pathway; L-methionine from S-methyl-5-thio-alpha-D-ribose 1-phosphate: step 5/6. In terms of biological role, catalyzes 2 different reactions between oxygen and the acireductone 1,2-dihydroxy-3-keto-5-methylthiopentene (DHK-MTPene) depending upon the metal bound in the active site. Fe-containing acireductone dioxygenase (Fe-ARD) produces formate and 2-keto-4-methylthiobutyrate (KMTB), the alpha-ketoacid precursor of methionine in the methionine recycle pathway. Ni-containing acireductone dioxygenase (Ni-ARD) produces methylthiopropionate, carbon monoxide and formate, and does not lie on the methionine recycle pathway. This is Acireductone dioxygenase from Sulfurihydrogenibium sp. (strain YO3AOP1).